Reading from the N-terminus, the 132-residue chain is MDYEEQLDRAMDEKPDVTGSETRFEVPDPNVRKEGNVTVYENFQATLDALSRTQDHVLKFLQNEVGTSASIDESGRARLTGEFGQRRVSDTLDAYVETYVTCPECGLPDTNLETDGDTIQLHCEACGARSTV.

Residues 1–30 form a disordered region; it reads MDYEEQLDRAMDEKPDVTGSETRFEVPDPN.

It belongs to the eIF-2-beta/eIF-5 family. Heterotrimer composed of an alpha, a beta and a gamma chain.

EIF-2 functions in the early steps of protein synthesis by forming a ternary complex with GTP and initiator tRNA. The polypeptide is Translation initiation factor 2 subunit beta (Halobacterium salinarum (strain ATCC 29341 / DSM 671 / R1)).